Reading from the N-terminus, the 216-residue chain is Peptide methionine sulfoxide reductase MsrA (216 aa).

Cys-54 is an active-site residue.

The protein belongs to the MsrA Met sulfoxide reductase family.

It catalyses the reaction L-methionyl-[protein] + [thioredoxin]-disulfide + H2O = L-methionyl-(S)-S-oxide-[protein] + [thioredoxin]-dithiol. It carries out the reaction [thioredoxin]-disulfide + L-methionine + H2O = L-methionine (S)-S-oxide + [thioredoxin]-dithiol. Functionally, has an important function as a repair enzyme for proteins that have been inactivated by oxidation. Catalyzes the reversible oxidation-reduction of methionine sulfoxide in proteins to methionine. The polypeptide is Peptide methionine sulfoxide reductase MsrA (Xanthomonas euvesicatoria pv. vesicatoria (strain 85-10) (Xanthomonas campestris pv. vesicatoria)).